The primary structure comprises 338 residues: Limbic system-associated membrane protein (338 aa).

A signal peptide spans 1-28 (MVARAQPDRKQLPLVLLRLLCLLPTGLP). Ig-like C2-type domains follow at residues 29–122 (VRSV…PKTS), 132–214 (PKIS…VRVT), and 219–306 (PTIT…LYLY). 4 N-linked (GlcNAc...) asparagine glycosylation sites follow: asparagine 40, asparagine 66, asparagine 136, and asparagine 148. Cysteine 53 and cysteine 111 are oxidised to a cystine. 2 cysteine pairs are disulfide-bonded: cysteine 153–cysteine 197 and cysteine 239–cysteine 290. N-linked (GlcNAc...) asparagine glycans are attached at residues asparagine 279, asparagine 287, asparagine 300, and asparagine 315. Asparagine 315 carries the GPI-anchor amidated asparagine lipid modification. Residues 316–338 (GSVSLAVPLWLLAASLLCLLSKC) constitute a propeptide, removed in mature form.

Belongs to the immunoglobulin superfamily. IgLON family.

The protein localises to the cell membrane. Its function is as follows. Mediates selective neuronal growth and axon targeting. Probably serves as a recognition molecule for the formation of limbic connections. The chain is Limbic system-associated membrane protein from Gallus gallus (Chicken).